Here is a 229-residue protein sequence, read N- to C-terminus: Non-structural protein P8 (229 aa).

The next 2 membrane-spanning stretches (helical) occupy residues 119–139 (IIHM…VCTL) and 162–182 (SLNP…MVCA).

It belongs to the orbivirus NS3 family. As to quaternary structure, forms homooligomers via coiled-coil motif. Interacts with host OPTN; this interaction inhibits innate immune response.

The protein resides in the host cell membrane. The protein localises to the host Golgi apparatus. Plays a role in the inhibition of host innate immune response. Interacts with host OPTN and thus inhibits the recruitment of TBK1 to the host Golgi apparatus. In turn, downstream partner IRF3 cannot be activated and IFN-beta production is impaired. Functionally, facilitates viral particle release either by increasing plasma membrane permeability through a viroporin-like activity or by viral budding. This Antilocapra americana (Pronghorn) protein is Non-structural protein P8 (Segment-10).